The chain runs to 147 residues: UPF0306 protein YpAngola_A4021 (147 aa).

It belongs to the UPF0306 family.

This chain is UPF0306 protein YpAngola_A4021, found in Yersinia pestis bv. Antiqua (strain Angola).